We begin with the raw amino-acid sequence, 473 residues long: NAC domain-containing protein 68 (473 aa).

Residues 4 to 154 (GLIGYRFSPT…KYVVCQVKYK (151 aa)) enclose the NAC domain. A DNA-binding region spans residues 108-160 (IGIKKTLVYHEGKSPHGVRTPWVMHEYHITCLPHHKRKYVVCQVKYKGEAAEI). The disordered stretch occupies residues 326–380 (DHMPRKPVTGTIDYSSDSGSDAGSISTTSYQGTSSPNISVGSSSRHLSSCSSTDS). Composition is skewed to low complexity over residues 340–354 (SSDS…STTS) and 364–379 (SVGS…SSTD). Residues 446 to 468 (FIYLMKMIIGNIISVLLPVKRLI) traverse the membrane as a helical segment.

The protein localises to the membrane. It localises to the nucleus. In terms of biological role, transcription activator activated by proteolytic cleavage through regulated intramembrane proteolysis (RIP) mediated by calpain or its functional homolog. Regulates cytokinin signaling during cell division. This chain is NAC domain-containing protein 68 (NAC68), found in Arabidopsis thaliana (Mouse-ear cress).